The primary structure comprises 163 residues: NADH-quinone oxidoreductase subunit B (163 aa).

4 residues coordinate [4Fe-4S] cluster: cysteine 32, cysteine 33, cysteine 98, and cysteine 127.

The protein belongs to the complex I 20 kDa subunit family. In terms of assembly, NDH-1 is composed of 14 different subunits. Subunits NuoB, C, D, E, F, and G constitute the peripheral sector of the complex. Requires [4Fe-4S] cluster as cofactor.

It is found in the cell inner membrane. The catalysed reaction is a quinone + NADH + 5 H(+)(in) = a quinol + NAD(+) + 4 H(+)(out). In terms of biological role, NDH-1 shuttles electrons from NADH, via FMN and iron-sulfur (Fe-S) centers, to quinones in the respiratory chain. Couples the redox reaction to proton translocation (for every two electrons transferred, four hydrogen ions are translocated across the cytoplasmic membrane), and thus conserves the redox energy in a proton gradient. The chain is NADH-quinone oxidoreductase subunit B from Pelobacter propionicus (strain DSM 2379 / NBRC 103807 / OttBd1).